The chain runs to 291 residues: Bifunctional protein FolD (291 aa).

Residues 167–169, S192, and I233 contribute to the NADP(+) site; that span reads GRS.

This sequence belongs to the tetrahydrofolate dehydrogenase/cyclohydrolase family. In terms of assembly, homodimer.

The enzyme catalyses (6R)-5,10-methylene-5,6,7,8-tetrahydrofolate + NADP(+) = (6R)-5,10-methenyltetrahydrofolate + NADPH. It catalyses the reaction (6R)-5,10-methenyltetrahydrofolate + H2O = (6R)-10-formyltetrahydrofolate + H(+). Its pathway is one-carbon metabolism; tetrahydrofolate interconversion. In terms of biological role, catalyzes the oxidation of 5,10-methylenetetrahydrofolate to 5,10-methenyltetrahydrofolate and then the hydrolysis of 5,10-methenyltetrahydrofolate to 10-formyltetrahydrofolate. The protein is Bifunctional protein FolD of Dichelobacter nodosus (strain VCS1703A).